The sequence spans 1592 residues: Serine/threonine-protein kinase mrck-1 (1592 aa).

The tract at residues 1–954 is involved in homo-dimerization; the sequence is MAEPPPDDSA…IFSPVSISAM (954 aa). The Protein kinase domain occupies 83-351; that stretch reads FEVLKVIGKG…LSDFQLHPFF (269 aa). ATP contacts are provided by residues 89–97 and K112; that span reads IGKGAFGEV. Residue D207 is the Proton acceptor of the active site. The AGC-kinase C-terminal domain occupies 352-426; that stretch reads EGIDWNTIRD…THGSLLSDAR (75 aa). S415 bears the Phosphoserine mark. Residue Y416 is modified to Phosphotyrosine. Coiled-coil stretches lie at residues 444–782 and 811–871; these read ELME…KNNS and LDLQ…IENS. The segment covering 782 to 796 has biased composition (polar residues); that stretch reads SPLTTSNYIQNTPSG. The segment at 782–801 is disordered; the sequence is SPLTTSNYIQNTPSGWGSRR. Residues 955–1534 form an involved in binding to membranes, with a preference for di-phosphorylated phosphoinositides (PIPs) region; it reads ERGHNFERMK…FRTIGKDDRS (580 aa). Residues 957–1007 form a Phorbol-ester/DAG-type zinc finger; the sequence is GHNFERMKIKTPTKCGHCTSILIGLDRQGLFCQSCQYACHVSCAERVSQSC. Positions 958, 971, 974, 988, 991, 996, 999, and 1007 each coordinate Zn(2+). A PH domain is found at 1026–1154; that stretch reads GTAYEGLVKT…WVVALSELKT (129 aa). The CNH domain occupies 1181–1479; the sequence is IRVAQCCAII…KPLSGDGILS (299 aa). The CRIB domain occupies 1544 to 1557; that stretch reads ISTPSDFMHIVHMG. The segment at 1544–1557 is involved in interaction with cdc-42 (GTP-bound). Deletion prevents rescue of a null mutant; furthermore deleted form of mrck-1 is no longer recruited to the cell cortex and instead appears to be completely cytoplasmic; it reads ISTPSDFMHIVHMG.

Belongs to the protein kinase superfamily. AGC Ser/Thr protein kinase family. DMPK subfamily. Homodimer, via N-terminal domains. Interacts (via the CRIB domain) with cdc-42 (GTP-bound), but with a lower affinity for cdc-42 bound to GDP; the interaction is direct and may play a role in the recruitment of mrck-1 to the apical membrane. It depends on Mg(2+) as a cofactor. Expressed in embryonic and L4 larval seam cells and in embryonic dorsal and ventral epidermal cells. Also expressed in the pharynx throughout development and in sublateral nerve cords in the L4 larva.

It localises to the cytoplasm. Its subcellular location is the cell cortex. It catalyses the reaction L-seryl-[protein] + ATP = O-phospho-L-seryl-[protein] + ADP + H(+). The catalysed reaction is L-threonyl-[protein] + ATP = O-phospho-L-threonyl-[protein] + ADP + H(+). Functionally, serine/threonine-protein kinase. Involved in regulating endoderm precursor cell movements during early gastrulation; activates apical myosin and thereby increases actomyosin contractility and tension in the apical cell cortex, probably as a result of recruitment of mrck-1 to the cortex by a combination of interaction with active cdc-42 and membrane binding. May phosphorylate and inactivate the phosphatase mel-11, and thereby contribute to the regulation of myosin II contractility during embryonic elongation. Involved in controlling canal length and Golgi/ER integrity during excretory canal elongation. This Caenorhabditis elegans protein is Serine/threonine-protein kinase mrck-1.